The chain runs to 149 residues: Arginine repressor (149 aa).

It belongs to the ArgR family.

The protein localises to the cytoplasm. Its pathway is amino-acid biosynthesis; L-arginine biosynthesis [regulation]. Regulates arginine biosynthesis genes. The polypeptide is Arginine repressor (Exiguobacterium sp. (strain ATCC BAA-1283 / AT1b)).